The following is a 395-amino-acid chain: MSGLACNSCNKDFEDDAEQKFHYKSEWHRYNLKRKIAGVPGVTEALFEARQAAIAQEKVKAVEAPMLYSCGICNKGYRSSKAHEQHLKSKSHVLKASTSTGEEDKAIIKQLPPRRVEKNNTAQLKGSIEEEESEDEWIEVDSDEDLDAEMNEDGEEEDMDEDGIEFELDPACCLMCDKKHKTIEKCMVHMHKFHGFFIPDIEYLKDPKGFLTYLGLKVKRDFVCLYCNELCHPFSSLEAVRKHMDAKGHCKVHYGDGGDEEDAELEEFYDYSSSYVNGDENQMVVSGESVNTVELFGGSELVITKRTDNKVTSRTLGSREFMRYYKQKPAPSSQKHIVNSLTSRYKMMGLATVQSKEAIVRMKVMREMNKRGAKSSVRLGMKSNVIRNLPNNVTY.

C2H2-type zinc fingers lie at residues 4–28 (LACN…SEWH), 68–92 (YSCG…SKSH), 171–194 (ACCL…HKFH), and 222–249 (FVCL…AKGH).

The protein belongs to the REI1 family. As to quaternary structure, can form homodimer. Interacts with RLP24, RLP24A, RPL24B, EBP1 and JJJ1.

It is found in the cytoplasm. In terms of biological role, pre-60S-associated factor involved in the cytoplasmic maturation of the 60S subunit. Involved in the dissociation and recycling of other late pre-60S factors before newly synthesized large ribosomal subunits enter translation. Can complement the growth defect of a yeast mutant lacking REI1. Required for leaf growth under cold temperature conditions. The protein is Cytoplasmic 60S subunit biogenesis factor REI1 homolog 2 of Arabidopsis thaliana (Mouse-ear cress).